Consider the following 259-residue polypeptide: Hemin import ATP-binding protein HmuV (259 aa).

The ABC transporter domain occupies 2–238 (IEARDLNVSI…ALLSEVFDCQ (237 aa)). 34-41 (GPNGSGKS) serves as a coordination point for ATP.

It belongs to the ABC transporter superfamily. Heme (hemin) importer (TC 3.A.1.14.5) family. As to quaternary structure, the complex is composed of two ATP-binding proteins (HmuV), two transmembrane proteins (HmuU) and a solute-binding protein (HmuT).

Its subcellular location is the cell inner membrane. Part of the ABC transporter complex HmuTUV involved in hemin import. Responsible for energy coupling to the transport system. This chain is Hemin import ATP-binding protein HmuV, found in Chelativorans sp. (strain BNC1).